A 553-amino-acid polypeptide reads, in one-letter code: Coiled-coil domain-containing protein 22 homolog (553 aa).

The interval 236–264 is disordered; that stretch reads DSEEPAPPPISTVKPDASAEEEASPIQEL. 3 coiled-coil regions span residues 261–286, 314–407, and 498–549; these read IQEL…KAHA, ERTS…QSLA, and NVTK…VEQP.

The protein belongs to the CCDC22 family.

This chain is Coiled-coil domain-containing protein 22 homolog, found in Drosophila erecta (Fruit fly).